The primary structure comprises 102 residues: Parathymosin (102 aa).

Positions 1–102 (MSEKSVEAAA…RQKTENGASA (102 aa)) are disordered. At Ser2 the chain carries N-acetylserine. Ser2 bears the Phosphoserine mark. Residue Lys4 is modified to N6-acetyllysine. A phosphoserine mark is found at Ser5 and Ser13. Over residues 13 to 37 (SAKDLKEKKEKVEEKAGRKERKKEV) the composition is skewed to basic and acidic residues. Lys15 is subject to N6-acetyllysine. Acidic residues predominate over residues 38 to 76 (VEEEENGAEEEEEETAEDGEEEDDGDEEDEEEEEEEDEG). Thr52 bears the Phosphothreonine mark. Lys92 is subject to N6-acetyllysine.

The protein belongs to the pro/parathymosin family.

Its function is as follows. Parathymosin may mediate immune function by blocking the effect of prothymosin alpha which confers resistance to certain opportunistic infections. This Bos taurus (Bovine) protein is Parathymosin (PTMS).